Here is a 216-residue protein sequence, read N- to C-terminus: GTP cyclohydrolase 1 (216 aa).

The Zn(2+) site is built by cysteine 108, histidine 111, and cysteine 179.

The protein belongs to the GTP cyclohydrolase I family. As to quaternary structure, homomer.

It catalyses the reaction GTP + H2O = 7,8-dihydroneopterin 3'-triphosphate + formate + H(+). It functions in the pathway cofactor biosynthesis; 7,8-dihydroneopterin triphosphate biosynthesis; 7,8-dihydroneopterin triphosphate from GTP: step 1/1. This Shewanella baltica (strain OS223) protein is GTP cyclohydrolase 1.